Here is a 597-residue protein sequence, read N- to C-terminus: Phosphoinositide phospholipase C 4 (597 aa).

Residues 26-60 (GPVEDVRDLFEKYTEGDAHMSPEQLQKLMTEEGGE) enclose the EF-hand domain. In terms of domain architecture, PI-PLC X-box spans 114–257 (QNMDAPLSHY…LKEKILISTK (144 aa)). Active-site residues include H129 and H174. Basic and acidic residues predominate over residues 259-290 (PKEYLEANDTKEKDNGEKGKDSDEDVWGKEPE). The segment at 259–324 (PKEYLEANDT…ERGSCESDTS (66 aa)) is disordered. Positions 293-309 (ISTQSDLDKVTSSVNDL) are enriched in polar residues. The PI-PLC Y-box domain occupies 333-449 (KRLIAIHAGK…GYVKKPDFLM (117 aa)). Residues 449–579 (MDASPNGQDF…QGIRAVPLFN (131 aa)) form the C2 domain.

The cofactor is Ca(2+). Low expression in leaves, roots, flowers and siliques. Expressed in pollen and in cells of the stigma surface.

The protein localises to the cytoplasm. It localises to the cytosol. It is found in the cell membrane. The catalysed reaction is a 1,2-diacyl-sn-glycero-3-phospho-(1D-myo-inositol-4,5-bisphosphate) + H2O = 1D-myo-inositol 1,4,5-trisphosphate + a 1,2-diacyl-sn-glycerol + H(+). Functionally, the production of the second messenger molecules diacylglycerol (DAG) and inositol 1,4,5-trisphosphate (IP3) is mediated by activated phosphatidylinositol-specific phospholipase C enzymes. The protein is Phosphoinositide phospholipase C 4 (PLC4) of Arabidopsis thaliana (Mouse-ear cress).